The chain runs to 150 residues: AN1-type zinc finger protein TMC1 (150 aa).

Residues 1-82 (MSDINEIEIP…TKKTTKKKKK (82 aa)) form a disordered region. Ser2 carries the post-translational modification N-acetylserine. Positions 23-33 (DPMHEIEDKST) are enriched in basic and acidic residues. 2 positions are modified to phosphoserine: Ser43 and Ser54. Over residues 53–70 (NSRSSSNSSVTSTGQSSR) the composition is skewed to low complexity. Over residues 71–82 (RVTKKTTKKKKK) the composition is skewed to basic residues. The AN1-type zinc-finger motif lies at 79 to 128 (KKKKNACYFDTCSSAASKFIGDCNFCKGHFCSKHRLMENHACNGLTSCKE). Zn(2+) is bound by residues Cys85, Cys90, Cys101, Cys104, Cys109, His112, His118, and Cys120.

The protein resides in the nucleus. May have a role in protecting cells from metalloid-induced proteotoxicity. The chain is AN1-type zinc finger protein TMC1 from Saccharomyces cerevisiae (strain ATCC 204508 / S288c) (Baker's yeast).